Here is a 921-residue protein sequence, read N- to C-terminus: Phototropin-1B (921 aa).

Gly residues predominate over residues Met-1–Gly-11. Disordered stretches follow at residues Met-1–Leu-59 and Thr-88–Ala-118. A compositionally biased stretch (low complexity) spans Ser-40–Ala-51. The segment covering Arg-97–Ala-117 has biased composition (polar residues). The region spanning Val-123–Ser-197 is the PAS 1 domain. FMN-binding positions include Asn-172–Gln-177, Arg-190, Asn-205, Asn-215, and Gln-236. An S-4a-FMN cysteine modification is found at Cys-173. The 55-residue stretch at Ser-197 to Val-251 folds into the PAC 1 domain. Polar residues predominate over residues Arg-286–Thr-295. Disordered regions lie at residues Arg-286–Arg-345 and Glu-366–Asp-391. Basic and acidic residues-rich tracts occupy residues Pro-312–Ser-321 and Glu-366–Asp-376. One can recognise a PAS 2 domain in the interval Arg-400–Gln-473. FMN is bound by residues Asn-449 to Gln-454, Arg-467, Asn-482, Asn-492, and Gln-513. Residue Cys-450 is modified to S-4a-FMN cysteine. In terms of domain architecture, PAC 2 spans Ala-474–Gly-528. In terms of domain architecture, Protein kinase spans Phe-594 to Phe-881. ATP contacts are provided by residues Leu-600–Val-608 and Lys-623. Asp-719 serves as the catalytic Proton acceptor.

It belongs to the protein kinase superfamily. Ser/Thr protein kinase family. As to quaternary structure, homodimer. Requires FMN as cofactor. Autophosphorylated in response to blue light irradiation. Post-translationally, 2 molecules of FMN bind covalently to cysteines after exposure to blue light and are reversed in the dark.

It catalyses the reaction L-seryl-[protein] + ATP = O-phospho-L-seryl-[protein] + ADP + H(+). The catalysed reaction is L-threonyl-[protein] + ATP = O-phospho-L-threonyl-[protein] + ADP + H(+). In terms of biological role, protein kinase that acts as a blue light photoreceptor in a signal-transduction pathway for phototropic responses. Regulates a wide range of physiological activities in plants that maximize the efficiency of photosynthesis, such as chloroplast relocations, stomata opening, and leaf expansion. This Oryza sativa subsp. japonica (Rice) protein is Phototropin-1B (PHOT1B).